The sequence spans 309 residues: Ribonuclease Z (309 aa).

Positions 63, 65, 67, 68, 145, 216, and 274 each coordinate Zn(2+). The Proton acceptor role is filled by aspartate 67.

Belongs to the RNase Z family. As to quaternary structure, homodimer. The cofactor is Zn(2+).

The enzyme catalyses Endonucleolytic cleavage of RNA, removing extra 3' nucleotides from tRNA precursor, generating 3' termini of tRNAs. A 3'-hydroxy group is left at the tRNA terminus and a 5'-phosphoryl group is left at the trailer molecule.. Zinc phosphodiesterase, which displays some tRNA 3'-processing endonuclease activity. Probably involved in tRNA maturation, by removing a 3'-trailer from precursor tRNA. In Streptococcus pyogenes serotype M6 (strain ATCC BAA-946 / MGAS10394), this protein is Ribonuclease Z.